The chain runs to 792 residues: Xaa-Pro dipeptidyl-peptidase (792 aa).

Active-site charge relay system residues include S363, D482, and H513.

The protein belongs to the peptidase S15 family. As to quaternary structure, homodimer.

Its subcellular location is the cytoplasm. It carries out the reaction Hydrolyzes Xaa-Pro-|- bonds to release unblocked, N-terminal dipeptides from substrates including Ala-Pro-|-p-nitroanilide and (sequentially) Tyr-Pro-|-Phe-Pro-|-Gly-Pro-|-Ile.. Functionally, removes N-terminal dipeptides sequentially from polypeptides having unsubstituted N-termini provided that the penultimate residue is proline. The chain is Xaa-Pro dipeptidyl-peptidase (pepX) from Lactobacillus delbrueckii subsp. lactis.